A 960-amino-acid polypeptide reads, in one-letter code: Dynamin-like GTPase OPA1, mitochondrial (960 aa).

A mitochondrion-targeting transit peptide spans 1-87; sequence MWRLRRAAVA…IKYGYQPRRN (87 aa). Residues 88-96 are Mitochondrial matrix-facing; that stretch reads FWPARLATR. The helical transmembrane segment at 97-113 threads the bilayer; it reads LLKLRYLILGSAVGGGY. Over 114 to 770 the chain is Mitochondrial intermembrane; sequence TAKKTFDQWK…NAIENMVGPD (657 aa). 2 consecutive short sequence motifs (LQQQIQ motif) follow at residues 181–186 and 217–222; these read DFFTSG and QLQEEL. Residues 210 to 254 are a coiled coil; sequence SDKEKIDQLQEELLHTQLKYQRILERLEKENKELRKLVLQKDDKG. Residue Lys-228 is modified to N6-acetyllysine. The short motif at 235 to 240 is the LQQQIQ motif element; that stretch reads RLEKEN. Residues 285 to 561 enclose the Dynamin-type G domain; the sequence is QDHLPRVVVV…FWKMVRESVE (277 aa). Residues 295 to 302 are G1 motif; that stretch reads GDQSAGKT. GTP contacts are provided by Ser-298, Gly-300, Lys-301, Thr-302, Ser-303, and Gly-317. Mg(2+) is bound at residue Thr-302. The tract at residues 321 to 324 is G2 motif; it reads MMTR. Mg(2+) is bound by residues Thr-323 and Asp-398. Positions 398 to 401 are G3 motif; the sequence is DLPG. Residues 467–470 form a G4 motif region; that stretch reads TKVD. The GTP site is built by Lys-468, Asp-470, Thr-503, Gly-506, and Asn-507. The segment at 501 to 504 is G5 motif; the sequence is VVTG. Stalk region stretches follow at residues 589 to 836 and 874 to 928; these read DRNE…IKDT and CNDV…IKLL. The paddle region stretch occupies residues 736–856; it reads SDKQQWDAAI…KTALNHCNLC (121 aa). An intramembrane segment occupies 771–781; the sequence is WKKRWLYWKNR. Residues 782 to 960 lie on the Mitochondrial intermembrane side of the membrane; it reads TQEQCVHNET…AFIEALHQEK (179 aa). The cysteines at positions 856 and 874 are disulfide-linked. Residues 895–960 adopt a coiled-coil conformation; that stretch reads RQQLTNTEVR…AFIEALHQEK (66 aa).

This sequence belongs to the TRAFAC class dynamin-like GTPase superfamily. Dynamin/Fzo/YdjA family. As to quaternary structure, oligomeric complex consisting of membrane-bound and soluble forms of OPA1. Interacts with RCC1L; RCC1L acts as a guanine nucleotide exchange factor (GEF) for OPA1 by exchanging bound GDP for free GTP. Interacts with CHCHD3 and IMMT; these interactions occur preferentially with soluble OPA1 forms. Interacts with PRELID1. Post-translationally, cleaved by OMA1 or YME1L downstream of the transmembrane region in response to different signals to generate soluble forms. Cleaved by OMA1 at position S1 following stress conditions, generating the short soluble form (Dynamin-like GTPase OPA1, short form; S-OPA1). AFG3L2 is involved in the regulation of OMA1-dependent processing of OPA1. PARL-dependent proteolytic processing releases an antiapoptotic soluble form not required for mitochondrial fusion. In terms of processing, cleavage at position S2 by YME1L is required to mediate oxidative phosphorylation (OXPHOS)-induced mitochondrial fusion. Cleavage occurs in the sequence motif Leu-Gln-Gln-Gln-Ile-Gln (LQQQIQ). Cleavage at position S2 by YME1L is required to mediate oxidative phosphorylation (OXPHOS)-induced mitochondrial fusion. Cleavage occurs in the sequence motif Leu-Gln-Gln-Gln-Ile-Gln (LQQQIQ). Cleavage at position S3 by YME1L is required for membrane tubulation. Post-translationally, cleavage at position S3 by YME1L is required for membrane tubulation. In terms of tissue distribution, highly expressed in retina. Also expressed in brain, testis, heart and skeletal muscle. Low levels of all isoforms expressed in a variety of tissues. As to expression, expressed in retina, skeletal muscle, heart, lung, ovary, colon, thyroid gland, leukocytes and fetal brain. Low levels of all isoforms expressed in a variety of tissues. Isoform 2 expressed in colon, liver, kidney, thyroid gland and leukocytes.

It localises to the mitochondrion inner membrane. The protein resides in the mitochondrion intermembrane space. It catalyses the reaction GTP + H2O = GDP + phosphate + H(+). Activated by guanine nucleotide exchange factor RCC1L. Dynamin-related GTPase that is essential for normal mitochondrial morphology by mediating fusion of the mitochondrial inner membranes, regulating cristae morphology and maintaining respiratory chain function. Exists in two forms: the transmembrane, long form (Dynamin-like GTPase OPA1, long form; L-OPA1), which is tethered to the inner mitochondrial membrane, and the short soluble form (Dynamin-like GTPase OPA1, short form; S-OPA1), which results from proteolytic cleavage and localizes in the intermembrane space. Both forms (L-OPA1 and S-OPA1) cooperate to catalyze the fusion of the mitochondrial inner membrane. The equilibrium between L-OPA1 and S-OPA1 is essential: excess levels of S-OPA1, produced by cleavage by OMA1 following loss of mitochondrial membrane potential, lead to an impaired equilibrium between L-OPA1 and S-OPA1, inhibiting mitochondrial fusion. The balance between L-OPA1 and S-OPA1 also influences cristae shape and morphology. Involved in remodeling cristae and the release of cytochrome c during apoptosis. Proteolytic processing by PARL in response to intrinsic apoptotic signals may lead to disassembly of OPA1 oligomers and release of the caspase activator cytochrome C (CYCS) into the mitochondrial intermembrane space. Acts as a regulator of T-helper Th17 cells, which are characterized by cells with fused mitochondria with tight cristae, by mediating mitochondrial membrane remodeling: OPA1 is required for interleukin-17 (IL-17) production. Its role in mitochondrial morphology is required for mitochondrial genome maintenance. Functionally, constitutes the transmembrane long form (L-OPA1) that plays a central role in mitochondrial inner membrane fusion and cristae morphology. L-OPA1 and the soluble short form (S-OPA1) form higher-order helical assemblies that coordinate the fusion of mitochondrial inner membranes. Inner membrane-anchored L-OPA1 molecules initiate membrane remodeling by recruiting soluble S-OPA1 to rapidly polymerize into a flexible cylindrical scaffold encaging the mitochondrial inner membrane. Once at the membrane surface, the formation of S-OPA1 helices induce bilayer curvature. OPA1 dimerization through the paddle region, which inserts into cardiolipin-containing membrane, promotes GTP hydrolysis and the helical assembly of a flexible OPA1 lattice on the membrane, which drives membrane curvature and mitochondrial fusion. Plays a role in the maintenance and remodeling of mitochondrial cristae, some invaginations of the mitochondrial inner membrane that provide an increase in the surface area. Probably acts by forming helical filaments at the inside of inner membrane tubes with the shape and dimensions of crista junctions. The equilibrium between L-OPA1 and S-OPA1 influences cristae shape and morphology: increased L-OPA1 levels promote cristae stacking and elongated mitochondria, while increased S-OPA1 levels correlated with irregular cristae packing and round mitochondria shape. Its function is as follows. Constitutes the soluble short form (S-OPA1) generated by cleavage by OMA1, which plays a central role in mitochondrial inner membrane fusion and cristae morphology. The transmembrane long form (L-OPA1) and the S-OPA1 form higher-order helical assemblies that coordinate the fusion of mitochondrial inner membranes. Inner membrane-anchored L-OPA1 molecules initiate membrane remodeling by recruiting soluble S-OPA1 to rapidly polymerize into a flexible cylindrical scaffold encaging the mitochondrial inner membrane. Once at the membrane surface, the formation of S-OPA1 helices induce bilayer curvature. OPA1 dimerization through the paddle region, which inserts into cardiolipin-containing membrane, promotes GTP hydrolysis and the helical assembly of a flexible OPA1 lattice on the membrane, which drives membrane curvature and mitochondrial fusion. Excess levels of S-OPA1 produced by cleavage by OMA1 following stress conditions that induce loss of mitochondrial membrane potential, lead to an impaired equilibrium between L-OPA1 and S-OPA1, thereby inhibiting mitochondrial fusion. Involved in mitochondrial safeguard in response to transient mitochondrial membrane depolarization by mediating flickering: cleavage by OMA1 leads to excess production of S-OPA1, preventing mitochondrial hyperfusion. Plays a role in the maintenance and remodeling of mitochondrial cristae, some invaginations of the mitochondrial inner membrane that provide an increase in the surface area. Probably acts by forming helical filaments at the inside of inner membrane tubes with the shape and dimensions of crista junctions. The equilibrium between L-OPA1 and S-OPA1 influences cristae shape and morphology: increased L-OPA1 levels promote cristae stacking and elongated mitochondria, while increased S-OPA1 levels correlated with irregular cristae packing and round mitochondria shape. In terms of biological role, coexpression of isoform 1 with shorter alternative products is required for optimal activity in promoting mitochondrial fusion. Isoforms that contain the alternative exon 4b are required for mitochondrial genome maintenance, possibly by anchoring the mitochondrial nucleoids to the inner mitochondrial membrane. This chain is Dynamin-like GTPase OPA1, mitochondrial, found in Homo sapiens (Human).